The chain runs to 56 residues: Botcinic acid biosynthesis cluster B protein 14 (56 aa).

It functions in the pathway polyketide biosynthesis. Its function is as follows. Part of the gene cluster B that mediates the biosynthesis of botcinic acid and its botcinin derivatives, acetate-derived polyketides that contribute to virulence when combined with the sesquiterpene botrydial. Botcinic acid and its derivatives have been shown to induce chlorosis and necrosis during host plant infection, but also have antifungal activities. Two polyketide synthases, BOA6 and BOA9, are involved in the biosynthesis of botcinins. BOA6 mediates the formation of the per-methylated tetraketide core by condensation of four units of malonyl-CoA with one unit of acetyl-CoA, which would be methylated in activated methylene groups to yield a bicyclic acid intermediate that could then either be converted to botrylactone derivatives or lose the starter acetate unit through a retro-Claisen type C-C bond cleavage to yield botcinin derivatives. The second polyketide synthase, BOA9, is probably required for the biosynthesis of the tetraketide side chain of botcinins. The methyltransferase (MT) domain within BOA6 is probably responsible for the incorporation of four methyl groups. The trans-enoyl reductase BOA5 might take over the enoyl reductase function of BOA6 that misses an ER domain. The monooxygenases BOA2, BOA3 and BOA4 might be involved in further hydroxylations at C4, C5 and C8, whereas BOA7, close to BOA9, could potentially be involved in the hydroxylation at C4 in the side chain of botcinins. This chain is Botcinic acid biosynthesis cluster B protein 14, found in Botryotinia fuckeliana (strain B05.10) (Noble rot fungus).